A 203-amino-acid polypeptide reads, in one-letter code: Outer-membrane lipoprotein LolB (203 aa).

A signal peptide spans M1 to G18. The N-palmitoyl cysteine moiety is linked to residue C19. The S-diacylglycerol cysteine moiety is linked to residue C19.

It belongs to the LolB family. As to quaternary structure, monomer.

The protein resides in the cell outer membrane. Functionally, plays a critical role in the incorporation of lipoproteins in the outer membrane after they are released by the LolA protein. This Cellvibrio japonicus (strain Ueda107) (Pseudomonas fluorescens subsp. cellulosa) protein is Outer-membrane lipoprotein LolB.